A 138-amino-acid polypeptide reads, in one-letter code: Small ribosomal subunit protein uS17 (138 aa).

Basic and acidic residues-rich tracts occupy residues 1 to 18 and 43 to 55; these read MSEEERNRGAEPEERAEA and AFDRDAGKVQKDT. The disordered stretch occupies residues 1–62; it reads MSEEERNRGA…KDTRRGRRKE (62 aa).

It belongs to the universal ribosomal protein uS17 family. As to quaternary structure, part of the 30S ribosomal subunit.

In terms of biological role, one of the primary rRNA binding proteins, it binds specifically to the 5'-end of 16S ribosomal RNA. This Rubrobacter xylanophilus (strain DSM 9941 / JCM 11954 / NBRC 16129 / PRD-1) protein is Small ribosomal subunit protein uS17.